A 160-amino-acid chain; its full sequence is Transcriptional repressor NrdR (160 aa).

Residues 3–34 (CPYCQCEDTQVKDSRPAEEGAVIRRRRVCSVC) fold into a zinc finger. The ATP-cone domain maps to 49–139 (LLVLKKSGRR…VYRDFRNASD (91 aa)).

Belongs to the NrdR family. Zn(2+) serves as cofactor.

In terms of biological role, negatively regulates transcription of bacterial ribonucleotide reductase nrd genes and operons by binding to NrdR-boxes. In Bartonella bacilliformis (strain ATCC 35685 / KC583 / Herrer 020/F12,63), this protein is Transcriptional repressor NrdR.